The primary structure comprises 328 residues: L-asparaginase (328 aa).

The Asparaginase/glutaminase domain occupies 1–320 (MKLLVLGTGG…EEIRKIMERN (320 aa)). Threonine 11 serves as the catalytic Nucleophile; O-isoaspartyl threonine intermediate. The L-aspartate site is built by threonine 11, aspartate 53, serine 54, threonine 85, and aspartate 86. Catalysis depends on charge relay system residues threonine 85, aspartate 86, lysine 156, and tyrosine 274.

It belongs to the asparaginase 1 family. Homodimer.

The enzyme catalyses L-asparagine + H2O = L-aspartate + NH4(+). Its activity is regulated as follows. Chohan et al. found that divalent metal ions and EDTA do not have any significant effect on enzyme activity, indicating that activity is independent of metal ions. In another study, Hong et al. showed that activity is enhanced by Mg(2+), significantly inhibited by Co(2+) and Ni(2+), and moderately inhibited by Ca(2+), Cu(2+) and EDTA. Unfolding studies suggest that urea cannot induce complete unfolding and inactivation of the enzyme even at a concentration 8 M. However, in the presence of 4 M guanidine hydrochloride, the enzyme structure is unfolded with complete loss of enzyme activity. In terms of biological role, catalyzes the hydrolysis of L-asparagine into L-aspartate and ammonia. Also displays D-asparaginase activity, which is about 50% of the L-asparaginase activity. Does not exhibit glutaminase activity. The protein is L-asparaginase of Thermococcus kodakarensis (strain ATCC BAA-918 / JCM 12380 / KOD1) (Pyrococcus kodakaraensis (strain KOD1)).